Consider the following 152-residue polypeptide: Xanthine-guanine phosphoribosyltransferase (152 aa).

5-phospho-alpha-D-ribose 1-diphosphate-binding positions include 37–38 (RG), Arg-69, and 88–96 (DDLVDTGGT). Residue Arg-69 participates in GMP binding. Asp-89 is a binding site for Mg(2+). Guanine is bound by residues Asp-92 and Ile-135. Residues Asp-92 and Ile-135 each contribute to the xanthine site. GMP contacts are provided by residues 92-96 (DTGGT) and 134-135 (WI).

This sequence belongs to the purine/pyrimidine phosphoribosyltransferase family. XGPT subfamily. In terms of assembly, homotetramer. It depends on Mg(2+) as a cofactor.

It is found in the cell inner membrane. The enzyme catalyses GMP + diphosphate = guanine + 5-phospho-alpha-D-ribose 1-diphosphate. The catalysed reaction is XMP + diphosphate = xanthine + 5-phospho-alpha-D-ribose 1-diphosphate. It carries out the reaction IMP + diphosphate = hypoxanthine + 5-phospho-alpha-D-ribose 1-diphosphate. Its pathway is purine metabolism; GMP biosynthesis via salvage pathway; GMP from guanine: step 1/1. The protein operates within purine metabolism; XMP biosynthesis via salvage pathway; XMP from xanthine: step 1/1. Functionally, purine salvage pathway enzyme that catalyzes the transfer of the ribosyl-5-phosphate group from 5-phospho-alpha-D-ribose 1-diphosphate (PRPP) to the N9 position of the 6-oxopurines guanine and xanthine to form the corresponding ribonucleotides GMP (guanosine 5'-monophosphate) and XMP (xanthosine 5'-monophosphate), with the release of PPi. To a lesser extent, also acts on hypoxanthine. The chain is Xanthine-guanine phosphoribosyltransferase from Escherichia coli (strain UTI89 / UPEC).